The sequence spans 1448 residues: Sister chromatid cohesion protein PDS5 homolog B-A (1448 aa).

The HEAT repeat unit spans residues 383-419 (LLVNDQLLNFVRERTLDKRWRVRKEAMMGLAQIYKKY). A compositionally biased stretch (polar residues) spans 1141–1155 (AGKQMLSKSSRMETV). The interval 1141–1448 (AGKQMLSKSS…TGRLRSAKKR (308 aa)) is disordered. Over residues 1156-1168 (SNASSGSNPSSPG) the composition is skewed to low complexity. Positions 1177–1186 (MELDQSENED) are enriched in acidic residues. 3 stretches are compositionally biased toward basic and acidic residues: residues 1196 to 1214 (KKSDKRDDSDLLKSELEKP), 1233 to 1243 (ELSKPAQEPKS), and 1264 to 1273 (WQEKRLKEDL). Residues 1285–1294 (KKGRRGRPPK) show a composition bias toward basic residues. The segment at residues 1286–1298 (KGRRGRPPKSAKM) is a DNA-binding region (a.T hook 1). Residues 1324–1341 (PTDEDDHLEISEEQDFEN) are compositionally biased toward acidic residues. Residues 1346–1356 (RKGRGSSRRTP) show a composition bias toward basic residues. DNA-binding regions (a.T hook) lie at residues 1374–1386 (QKRRGRPPKTPTV) and 1390–1402 (KSHVGRPRKVVSK). Residues 1389–1399 (KKSHVGRPRKV) are compositionally biased toward basic residues.

This sequence belongs to the PDS5 family. As to quaternary structure, interacts with the cohesin complex. Post-translationally, phosphorylated in mitotic cells.

It is found in the nucleus. Its function is as follows. Plays a role in androgen-induced proliferative arrest. Required for maintenance of sister chromatid cohesion during mitosis. The polypeptide is Sister chromatid cohesion protein PDS5 homolog B-A (pds5b-a) (Xenopus laevis (African clawed frog)).